The sequence spans 56 residues: Cytochrome b-c1 complex subunit 10 (56 aa).

Residues 1–12 are Mitochondrial matrix-facing; sequence MLTRFLGPRYRQ. The helical transmembrane segment at 13–35 threads the bilayer; sequence LARNWVPTASLWGAVGAVGLVWA. Over 36–56 the chain is Mitochondrial intermembrane; it reads TDWRLILDWVPYINGKFKKDD.

The protein belongs to the UQCR11/QCR10 family. As to quaternary structure, component of the ubiquinol-cytochrome c oxidoreductase (cytochrome b-c1 complex, complex III, CIII), a multisubunit enzyme composed of 11 subunits. The complex is composed of 3 respiratory subunits cytochrome b, cytochrome c1 and Rieske protein UQCRFS1, 2 core protein subunits UQCRC1/QCR1 and UQCRC2/QCR2, and 6 low-molecular weight protein subunits UQCRH/QCR6, UQCRB/QCR7, UQCRQ/QCR8, UQCR10/QCR9, UQCR11/QCR10 and subunit 9, the cleavage product of Rieske protein UQCRFS1. The complex exists as an obligatory dimer and forms supercomplexes (SCs) in the inner mitochondrial membrane with NADH-ubiquinone oxidoreductase (complex I, CI) and cytochrome c oxidase (complex IV, CIV), resulting in different assemblies (supercomplex SCI(1)III(2)IV(1) and megacomplex MCI(2)III(2)IV(2)).

It localises to the mitochondrion inner membrane. In terms of biological role, component of the ubiquinol-cytochrome c oxidoreductase, a multisubunit transmembrane complex that is part of the mitochondrial electron transport chain which drives oxidative phosphorylation. The respiratory chain contains 3 multisubunit complexes succinate dehydrogenase (complex II, CII), ubiquinol-cytochrome c oxidoreductase (cytochrome b-c1 complex, complex III, CIII) and cytochrome c oxidase (complex IV, CIV), that cooperate to transfer electrons derived from NADH and succinate to molecular oxygen, creating an electrochemical gradient over the inner membrane that drives transmembrane transport and the ATP synthase. The cytochrome b-c1 complex catalyzes electron transfer from ubiquinol to cytochrome c, linking this redox reaction to translocation of protons across the mitochondrial inner membrane, with protons being carried across the membrane as hydrogens on the quinol. In the process called Q cycle, 2 protons are consumed from the matrix, 4 protons are released into the intermembrane space and 2 electrons are passed to cytochrome c. QCR10 has a role in CIII assembly and RIP1 stability. In Bos taurus (Bovine), this protein is Cytochrome b-c1 complex subunit 10 (UQCR11).